Consider the following 315-residue polypeptide: Ribosomal protein L11 methyltransferase (315 aa).

4 residues coordinate S-adenosyl-L-methionine: Thr163, Gly185, Asp207, and Asn249.

The protein belongs to the methyltransferase superfamily. PrmA family.

It localises to the cytoplasm. The enzyme catalyses L-lysyl-[protein] + 3 S-adenosyl-L-methionine = N(6),N(6),N(6)-trimethyl-L-lysyl-[protein] + 3 S-adenosyl-L-homocysteine + 3 H(+). Methylates ribosomal protein L11. The polypeptide is Ribosomal protein L11 methyltransferase (Lactobacillus helveticus (strain DPC 4571)).